The chain runs to 123 residues: Ribonuclease P protein component (123 aa).

Belongs to the RnpA family. In terms of assembly, consists of a catalytic RNA component (M1 or rnpB) and a protein subunit.

It carries out the reaction Endonucleolytic cleavage of RNA, removing 5'-extranucleotides from tRNA precursor.. In terms of biological role, RNaseP catalyzes the removal of the 5'-leader sequence from pre-tRNA to produce the mature 5'-terminus. It can also cleave other RNA substrates such as 4.5S RNA. The protein component plays an auxiliary but essential role in vivo by binding to the 5'-leader sequence and broadening the substrate specificity of the ribozyme. The sequence is that of Ribonuclease P protein component from Bordetella bronchiseptica (strain ATCC BAA-588 / NCTC 13252 / RB50) (Alcaligenes bronchisepticus).